The following is a 195-amino-acid chain: ATP-dependent Clp protease proteolytic subunit 3 (195 aa).

Serine 97 serves as the catalytic Nucleophile. Histidine 122 is a catalytic residue.

It belongs to the peptidase S14 family. As to quaternary structure, fourteen ClpP subunits assemble into 2 heptameric rings which stack back to back to give a disk-like structure with a central cavity, resembling the structure of eukaryotic proteasomes.

It is found in the cytoplasm. It catalyses the reaction Hydrolysis of proteins to small peptides in the presence of ATP and magnesium. alpha-casein is the usual test substrate. In the absence of ATP, only oligopeptides shorter than five residues are hydrolyzed (such as succinyl-Leu-Tyr-|-NHMec, and Leu-Tyr-Leu-|-Tyr-Trp, in which cleavage of the -Tyr-|-Leu- and -Tyr-|-Trp bonds also occurs).. In terms of biological role, cleaves peptides in various proteins in a process that requires ATP hydrolysis. Has a chymotrypsin-like activity. Plays a major role in the degradation of misfolded proteins. This Rhizobium meliloti (strain 1021) (Ensifer meliloti) protein is ATP-dependent Clp protease proteolytic subunit 3.